A 301-amino-acid polypeptide reads, in one-letter code: Probable actin-related protein 2/3 complex subunit 2 (301 aa).

This sequence belongs to the ARPC2 family. Component of the Arp2/3 complex, at least composed of arx-1, arx-2, arx-4 and arx-6.

Its subcellular location is the cytoplasm. The protein resides in the cytoskeleton. Functionally, functions as actin-binding component of the Arp2/3 complex which is involved in regulation of actin polymerization and together with an activating nucleation-promoting factor (NPF) mediates the formation of branched actin networks. Seems to contact the mother actin filament. Plays a role in time-dependent memory loss and the retention of conditioned behavior over time. The sequence is that of Probable actin-related protein 2/3 complex subunit 2 from Caenorhabditis elegans.